The primary structure comprises 181 residues: Large ribosomal subunit protein uL5 (181 aa).

The protein belongs to the universal ribosomal protein uL5 family. Part of the 50S ribosomal subunit; contacts the 5S rRNA and probably tRNA. Forms a bridge to the 30S subunit in the 70S ribosome.

This is one of the proteins that bind and probably mediate the attachment of the 5S RNA into the large ribosomal subunit, where it forms part of the central protuberance. In the 70S ribosome it contacts protein S13 of the 30S subunit (bridge B1b), connecting the 2 subunits; this bridge is implicated in subunit movement. May contact the P site tRNA; the 5S rRNA and some of its associated proteins might help stabilize positioning of ribosome-bound tRNAs. The protein is Large ribosomal subunit protein uL5 of Methanococcus vannielii.